Consider the following 692-residue polypeptide: Elongation factor G (692 aa).

The region spanning 8–282 (EKTRNIGIMA…AVLDYLPAPT (275 aa)) is the tr-type G domain. GTP is bound by residues 17–24 (AHIDAGKT), 81–85 (DTPGH), and 135–138 (NKMD).

This sequence belongs to the TRAFAC class translation factor GTPase superfamily. Classic translation factor GTPase family. EF-G/EF-2 subfamily.

It localises to the cytoplasm. In terms of biological role, catalyzes the GTP-dependent ribosomal translocation step during translation elongation. During this step, the ribosome changes from the pre-translocational (PRE) to the post-translocational (POST) state as the newly formed A-site-bound peptidyl-tRNA and P-site-bound deacylated tRNA move to the P and E sites, respectively. Catalyzes the coordinated movement of the two tRNA molecules, the mRNA and conformational changes in the ribosome. This Bacillus licheniformis (strain ATCC 14580 / DSM 13 / JCM 2505 / CCUG 7422 / NBRC 12200 / NCIMB 9375 / NCTC 10341 / NRRL NRS-1264 / Gibson 46) protein is Elongation factor G.